The following is a 369-amino-acid chain: S-adenosylmethionine decarboxylase proenzyme 2 (369 aa).

Active-site residues include E9 and E12. The active-site Schiff-base intermediate with substrate; via pyruvic acid is the S69. S69 bears the Pyruvic acid (Ser); by autocatalysis mark. Catalysis depends on C83, which acts as the Proton donor; for catalytic activity. Residues S236 and H249 each act as proton acceptor; for processing activity in the active site.

This sequence belongs to the eukaryotic AdoMetDC family. It depends on pyruvate as a cofactor. In terms of processing, is synthesized initially as an inactive proenzyme. Formation of the active enzyme involves a self-maturation process in which the active site pyruvoyl group is generated from an internal serine residue via an autocatalytic post-translational modification. Two non-identical subunits are generated from the proenzyme in this reaction, and the pyruvate is formed at the N-terminus of the alpha chain, which is derived from the carboxyl end of the proenzyme. The post-translation cleavage follows an unusual pathway, termed non-hydrolytic serinolysis, in which the side chain hydroxyl group of the serine supplies its oxygen atom to form the C-terminus of the beta chain, while the remainder of the serine residue undergoes an oxidative deamination to produce ammonia and the pyruvoyl group blocking the N-terminus of the alpha chain.

It catalyses the reaction S-adenosyl-L-methionine + H(+) = S-adenosyl 3-(methylsulfanyl)propylamine + CO2. It participates in amine and polyamine biosynthesis; S-adenosylmethioninamine biosynthesis; S-adenosylmethioninamine from S-adenosyl-L-methionine: step 1/1. This is S-adenosylmethionine decarboxylase proenzyme 2 (SAMDC2) from Brassica juncea (Indian mustard).